We begin with the raw amino-acid sequence, 94 residues long: MGRSLKKGPYVDPKLLKKIRELNEKGEKRIIKTWSRRSVIVPEMVGHTIAVYNGRKHIPVYITENMIGHRLGEFAPTRTFTGHRIPTARITAIK.

This sequence belongs to the universal ribosomal protein uS19 family.

In terms of biological role, protein S19 forms a complex with S13 that binds strongly to the 16S ribosomal RNA. This chain is Small ribosomal subunit protein uS19, found in Dictyoglomus thermophilum (strain ATCC 35947 / DSM 3960 / H-6-12).